Reading from the N-terminus, the 345-residue chain is D-fructose 1,6-bisphosphatase class 2/sedoheptulose 1,7-bisphosphatase (345 aa).

Mn(2+) is bound by residues D33, E57, D97, and E100. Residues 100-102 (EGT), Y131, 176-178 (RPR), and 198-200 (DGD) each bind substrate. Position 225 (E225) interacts with Mn(2+).

It belongs to the FBPase class 2 family. In terms of assembly, homotetramer. Mn(2+) serves as cofactor.

The enzyme catalyses beta-D-fructose 1,6-bisphosphate + H2O = beta-D-fructose 6-phosphate + phosphate. The catalysed reaction is D-sedoheptulose 1,7-bisphosphate + H2O = D-sedoheptulose 7-phosphate + phosphate. It participates in carbohydrate biosynthesis; Calvin cycle. Catalyzes the hydrolysis of fructose 1,6-bisphosphate (Fru 1,6-P2) and sedoheptulose 1,7-bisphosphate (Sed 1,7-P2) to fructose 6-phosphate and sedoheptulose 7-phosphate, respectively. The chain is D-fructose 1,6-bisphosphatase class 2/sedoheptulose 1,7-bisphosphatase from Crocosphaera subtropica (strain ATCC 51142 / BH68) (Cyanothece sp. (strain ATCC 51142)).